The primary structure comprises 387 residues: Phosphoglycerate kinase (387 aa).

Residues 21-23, Arg36, 59-62, Arg113, and Arg146 each bind substrate; these read DLN and HLGR. Residues Lys197, Glu314, and 340-343 each bind ATP; that span reads GGDT.

Belongs to the phosphoglycerate kinase family. As to quaternary structure, monomer.

The protein resides in the cytoplasm. The enzyme catalyses (2R)-3-phosphoglycerate + ATP = (2R)-3-phospho-glyceroyl phosphate + ADP. It functions in the pathway carbohydrate degradation; glycolysis; pyruvate from D-glyceraldehyde 3-phosphate: step 2/5. The sequence is that of Phosphoglycerate kinase from Photorhabdus luminescens (Xenorhabdus luminescens).